Consider the following 47-residue polypeptide: Protein DVU_0533 (47 aa).

A helical membrane pass occupies residues 18 to 37 (WTYILMGVTLLVYVGYWLFL).

It is found in the cell membrane. HMWC (high-molecular-weight cytochrome c), ORF2, ORF3, ORF4, ORF5 and ORF6 in the HMC operon form a transmembrane protein complex that allows electron flow from the periplasmic hydrogenase to the cytoplasmic enzymes that catalyze reduction of sulfates. The protein is Protein DVU_0533 of Nitratidesulfovibrio vulgaris (strain ATCC 29579 / DSM 644 / CCUG 34227 / NCIMB 8303 / VKM B-1760 / Hildenborough) (Desulfovibrio vulgaris).